Here is a 216-residue protein sequence, read N- to C-terminus: Proenkephalin-A-B (216 aa).

Propeptides lie at residues 64-85, 93-131, 144-155, 165-175, and 183-207; these read MDELYHAEPEEDDAGGEILAKN, EYDSNRDASDLLRELLATSGDPESAIYHDNNSETPGEMN, STDLEDETRGIQ, VGRPEWWQDYQ, and TRFTDSFLPSDEDGESYSKENPDME. The segment at 114–133 is disordered; sequence PESAIYHDNNSETPGEMNKR.

The protein belongs to the opioid neuropeptide precursor family. The N-terminal domain contains 6 conserved cysteines thought to be involved in disulfide bonding and/or processing.

The protein resides in the secreted. In terms of biological role, enkephalin neuropeptides compete with and mimic the effects of opiate drugs. They play a role in a number of physiologic functions, including pain perception and responses to stress. The chain is Proenkephalin-A-B (penk-b) from Xenopus laevis (African clawed frog).